Consider the following 354-residue polypeptide: GTPase Obg (354 aa).

Residues 1 to 159 form the Obg domain; sequence MKFVDEVKIH…RDLVLELKLL (159 aa). Positions 160–333 constitute an OBG-type G domain; that stretch reads ADVGIVGYPN…LLDAVGRALF (174 aa). GTP-binding positions include 166–173, 191–195, 212–215, 283–286, and 314–316; these read GYPNAGKS, FTTLT, DIPG, TKID, and SAV. Mg(2+)-binding residues include S173 and T193.

It belongs to the TRAFAC class OBG-HflX-like GTPase superfamily. OBG GTPase family. In terms of assembly, monomer. Requires Mg(2+) as cofactor.

It is found in the cytoplasm. In terms of biological role, an essential GTPase which binds GTP, GDP and possibly (p)ppGpp with moderate affinity, with high nucleotide exchange rates and a fairly low GTP hydrolysis rate. Plays a role in control of the cell cycle, stress response, ribosome biogenesis and in those bacteria that undergo differentiation, in morphogenesis control. The protein is GTPase Obg of Anaeromyxobacter dehalogenans (strain 2CP-C).